A 616-amino-acid chain; its full sequence is Dihydroxy-acid dehydratase (616 aa).

Asp81 serves as a coordination point for Mg(2+). Position 122 (Cys122) interacts with [2Fe-2S] cluster. Mg(2+) is bound by residues Asp123 and Lys124. Lys124 carries the N6-carboxylysine modification. Position 195 (Cys195) interacts with [2Fe-2S] cluster. Glu491 is a binding site for Mg(2+). The active-site Proton acceptor is the Ser517.

The protein belongs to the IlvD/Edd family. Homodimer. It depends on [2Fe-2S] cluster as a cofactor. Mg(2+) serves as cofactor.

The catalysed reaction is (2R)-2,3-dihydroxy-3-methylbutanoate = 3-methyl-2-oxobutanoate + H2O. It catalyses the reaction (2R,3R)-2,3-dihydroxy-3-methylpentanoate = (S)-3-methyl-2-oxopentanoate + H2O. Its pathway is amino-acid biosynthesis; L-isoleucine biosynthesis; L-isoleucine from 2-oxobutanoate: step 3/4. It functions in the pathway amino-acid biosynthesis; L-valine biosynthesis; L-valine from pyruvate: step 3/4. Its function is as follows. Functions in the biosynthesis of branched-chain amino acids. Catalyzes the dehydration of (2R,3R)-2,3-dihydroxy-3-methylpentanoate (2,3-dihydroxy-3-methylvalerate) into 2-oxo-3-methylpentanoate (2-oxo-3-methylvalerate) and of (2R)-2,3-dihydroxy-3-methylbutanoate (2,3-dihydroxyisovalerate) into 2-oxo-3-methylbutanoate (2-oxoisovalerate), the penultimate precursor to L-isoleucine and L-valine, respectively. The sequence is that of Dihydroxy-acid dehydratase from Klebsiella pneumoniae subsp. pneumoniae (strain ATCC 700721 / MGH 78578).